The sequence spans 447 residues: Glucose-6-phosphate isomerase (447 aa).

Catalysis depends on E288, which acts as the Proton donor. Residues H309 and K423 contribute to the active site.

It belongs to the GPI family.

The protein resides in the cytoplasm. The catalysed reaction is alpha-D-glucose 6-phosphate = beta-D-fructose 6-phosphate. Its pathway is carbohydrate biosynthesis; gluconeogenesis. It participates in carbohydrate degradation; glycolysis; D-glyceraldehyde 3-phosphate and glycerone phosphate from D-glucose: step 2/4. Catalyzes the reversible isomerization of glucose-6-phosphate to fructose-6-phosphate. In Lactobacillus johnsonii (strain CNCM I-12250 / La1 / NCC 533), this protein is Glucose-6-phosphate isomerase.